Reading from the N-terminus, the 221-residue chain is CASP-like protein 4C1 (221 aa).

The tract at residues 1 to 21 is disordered; it reads MDSPESSDRGLNPMTPDHGGH. The Cytoplasmic portion of the chain corresponds to 1–54; sequence MDSPESSDRGLNPMTPDHGGHNGKVVHYFGQGVEGGPASPRKLGHGHLHPKANT. The helical transmembrane segment at 55–75 threads the bilayer; the sequence is ALLLLRLLTFAFSLASLVIMA. Residues 76 to 101 lie on the Extracellular side of the membrane; sequence TNSATTTATAGRHRTVNWVDFDTYRY. The helical transmembrane segment at 102 to 122 threads the bilayer; it reads VLAACAIVCLYSFAEIGLGLW. Topologically, residues 123 to 144 are cytoplasmic; it reads YLLKGRMVMPESMAHWFDFGHD. The helical transmembrane segment at 145–165 threads the bilayer; the sequence is QGFAYLIFSACSGATAVAHNL. The Extracellular segment spans residues 166–189; sequence RERHILIHGMYGCDEANSFCMKAE. A helical transmembrane segment spans residues 190–210; the sequence is ISIGLAFGAFLFIALSSLLSG. At 211-221 the chain is on the cytoplasmic side; sequence YRLVKWLILGP.

The protein belongs to the Casparian strip membrane proteins (CASP) family. As to quaternary structure, homodimer and heterodimers.

It is found in the cell membrane. The polypeptide is CASP-like protein 4C1 (Pteridium aquilinum subsp. aquilinum (Bracken fern)).